The chain runs to 178 residues: Large ribosomal subunit protein uL5 (178 aa).

It belongs to the universal ribosomal protein uL5 family. As to quaternary structure, part of the 50S ribosomal subunit; part of the 5S rRNA/L5/L18/L25 subcomplex. Contacts the 5S rRNA and the P site tRNA. Forms a bridge to the 30S subunit in the 70S ribosome.

This is one of the proteins that bind and probably mediate the attachment of the 5S RNA into the large ribosomal subunit, where it forms part of the central protuberance. In the 70S ribosome it contacts protein S13 of the 30S subunit (bridge B1b), connecting the 2 subunits; this bridge is implicated in subunit movement. Contacts the P site tRNA; the 5S rRNA and some of its associated proteins might help stabilize positioning of ribosome-bound tRNAs. The chain is Large ribosomal subunit protein uL5 from Acinetobacter baumannii (strain AB0057).